Reading from the N-terminus, the 872-residue chain is Lysosomal cholesterol signaling protein (872 aa).

The Lumenal segment spans residues 1-40 (MNSFSNLPAENLTIAVNMTKTLPTAVMHGFNSTNDPPSMS). Positions 3-372 (SFSNLPAENL…SAWLLTFPTM (370 aa)) are PIN-like transporter. N-linked (GlcNAc...) asparagine glycosylation is found at Asn11, Asn17, and Asn31. A helical membrane pass occupies residues 41-61 (ITRLFPALLECFGIVLCGYIA). Cholesterol contacts are provided by Phe45 and Tyr59. The Cytoplasmic segment spans residues 62–81 (GRANVITSTQAKGLGNFVSR). A helical transmembrane segment spans residues 82 to 102 (FALPALLFKNMVVLNFSNVDW). Topologically, residues 103-106 (SFLY) are lumenal. The helical transmembrane segment at 107–127 (SILIAKASVFFIVCVLTLLVA) threads the bilayer. At 128–135 (SPDSRFSK) the chain is on the cytoplasmic side. Residues 136–156 (AGLFPIFATQSNDFALGYPIV) traverse the membrane as a discontinuously helical segment. Residues 157–169 (EALYQTTYPEYLQ) are Lumenal-facing. Residues 170-190 (YIYLVAPISLMMLNPIGFIFC) traverse the membrane as a helical segment. Over 191-215 (EIQKWKDTQNASQNKIKIVGLGLLR) the chain is Cytoplasmic. A discontinuously helical membrane pass occupies residues 216–236 (VLQNPIVFMVFIGIAFNFILD). Residues 237–245 (RKVPVYVEN) lie on the Lumenal side of the membrane. The chain crosses the membrane as a discontinuously helical span at residues 246-266 (FLDGLGNSFSGSALFYLGLTM). At 267-275 (VGKIKRLKK) the chain is on the cytoplasmic side. 3 residues coordinate cholesterol: Gly268, Lys269, and Ile270. The helical transmembrane segment at 276-296 (SAFVVLILLITAKLLVLPLLC) threads the bilayer. Residues 297–317 (REMVELLDKGDSVVNHTSLSN) lie on the Lumenal side of the membrane. The N-linked (GlcNAc...) asparagine glycan is linked to Asn311. A discontinuously helical membrane pass occupies residues 318-338 (YAFLYGVFPVAPGVAIFATQF). The Cytoplasmic segment spans residues 339 to 348 (NMEVEIITSG). Residues 349–369 (MVISTFVSAPIMYVSAWLLTF) form a helical membrane-spanning segment. The Lumenal segment spans residues 370-383 (PTMDPKPLAYAIQN). The tract at residues 382 to 719 (QNVSFDISIV…FGIFGLDKHL (338 aa)) is GPCR. Asn383 is a glycosylation site (N-linked (GlcNAc...) asparagine). Residues 384–404 (VSFDISIVSLISLIWSQAILL) traverse the membrane as a helical segment. At 405–416 (LSKKYKQLPHML) the chain is on the cytoplasmic side. The helical transmembrane segment at 417-437 (TTNLLIAQSIVCAGMMIWNFV) threads the bilayer. The Lumenal segment spans residues 438–440 (KEK). A helical membrane pass occupies residues 441–461 (NFVGQILVFVLLYSSLYSTYL). Residues 462–482 (WTGLLAISLFLLKKRERVQIP) are Cytoplasmic-facing. The chain crosses the membrane as a helical span at residues 483 to 503 (VGIIIISGWGIPALLVGVLLI). Over 504–522 (TGKHSGDSIDSAFFYGKEQ) the chain is Lumenal. A helical membrane pass occupies residues 523-543 (MITTAVTLFCSILIAGISLMC). The Cytoplasmic portion of the chain corresponds to 544–662 (MNRTAQAGSY…GDQQLTRHVL (119 aa)). Cholesterol is bound at residue Arg659. The helical transmembrane segment at 663–683 (LCLLLIIGLFANLSSCLWWLF) threads the bilayer. Topologically, residues 684-693 (NQEPGRLYVE) are lumenal. The chain crosses the membrane as a helical span at residues 694-714 (LQFFCAVFNFGQGFISFGIFG). The Cytoplasmic segment spans residues 715 to 872 (LDKHLIILPF…SSPPSHSPKT (158 aa)). The DEP domain occupies 759–837 (YHRDLCIRNI…DEYLFYRFLQ (79 aa)).

Homodimer; via the transporter region and DEP domain. Interacts with the GATOR1 complex; preventing interaction between GATOR1 and KICSTOR; interaction is disrupted upon cholesterol starvation.

Its subcellular location is the lysosome membrane. Cholesterol-binding protein that acts as a regulator of mTORC1 signaling pathway. Acts as a sensor of cholesterol to signal cholesterol sufficiency to mTORC1: in presence of cholesterol, binds cholesterol, leading to disruption of the interaction between the GATOR1 and KICSTOR complexes and promotion of mTORC1 signaling. Upon cholesterol starvation, GPR155/LYCHOS is unable to perturb the association between GATOR1 and KICSTOR, leading to mTORC1 signaling inhibition. Binds indole-3-acetic acid and may play a role in tryptophan metabolism. The polypeptide is Lysosomal cholesterol signaling protein (GPR155) (Pongo abelii (Sumatran orangutan)).